A 477-amino-acid polypeptide reads, in one-letter code: Zinc metalloproteinase/disintegrin (477 aa).

An N-terminal signal peptide occupies residues 1–20 (MIEVLLVTICLAAFPYQGSS). The propeptide occupies 21–187 (IILESGNVND…PIKKASQSNL (167 aa)). Residues 193–389 (RYIELFLVVD…DNPQCILNKQ (197 aa)) enclose the Peptidase M12B domain. Glutamate 196 and aspartate 280 together coordinate Ca(2+). 3 disulfides stabilise this stretch: cysteine 304–cysteine 384, cysteine 344–cysteine 368, and cysteine 346–cysteine 351. Histidine 329 is a Zn(2+) binding site. The active site involves glutamate 330. Residues histidine 333 and histidine 339 each contribute to the Zn(2+) site. Ca(2+) contacts are provided by cysteine 384 and asparagine 387. The propeptide occupies 390 to 404 (LRTDTVSTPVSGKNF). The region spanning 396–477 (STPVSGKNFG…AGCPRNPFHA (82 aa)) is the Disintegrin domain. 6 cysteine pairs are disulfide-bonded: cysteine 410–cysteine 425, cysteine 412–cysteine 420, cysteine 419–cysteine 442, cysteine 433–cysteine 439, cysteine 438–cysteine 463, and cysteine 451–cysteine 470. Residues 455–457 (RGD) carry the Cell attachment site motif.

It belongs to the venom metalloproteinase (M12B) family. P-II subfamily. P-IIa sub-subfamily. In terms of assembly, monomer. Zn(2+) serves as cofactor. In terms of tissue distribution, expressed by the venom gland.

The protein resides in the secreted. Its activity is regulated as follows. Inhibited by 1,10-phenanthroline and EDTA. Impairs hemostasis in the envenomed animal. Does not exhibit detectable plasminogen activating activity. Has hemagglutinating activity on red blood cells. Cleaves insulin B chain at '38-Ala-|-Leu-39' and '40-Tyr-|-Leu-41' bonds. In terms of biological role, this recombinant protein shows high inhibitory activity on collagen-induced platelet aggregation. The sequence is that of Zinc metalloproteinase/disintegrin from Bothrops jararaca (Jararaca).